The following is a 678-amino-acid chain: MGDSHEDTSATMPEAVAEEVSLFSTTDMVLFSLIVGVLTYWFIFRKKKEEIPEFSKIQTTAPPVKESSFVEKMKKTGRNIIVFYGSQTGTAEEFANRLSKDAHRYGMRGMSADPEEYDLADLSSLPEIDKSLVVFCMATYGEGDPTDNAQDFYDWLQETDVDLTGVKFAVFGLGNKTYEHFNAMGKYVDQRLEQLGAQRIFELGLGDDDGNLEEDFITWREQFWPAVCEFFGVEATGEESSIRQYELVVHEDMDVAKVYTGEMGRLKSYENQKPPFDAKNPFLAAVTANRKLNQGTERHLMHLELDISDSKIRYESGDHVAVYPANDSALVNQIGEILGADLDVIMSLNNLDEESNKKHPFPCPTTYRTALTYYLDITNPPRTNVLYELAQYASEPSEQEHLHKMASSSGEGKELYLSWVVEARRHILAILQDYPSLRPPIDHLCELLPRLQARYYSIASSSKVHPNSVHICAVAVEYEAKSGRVNKGVATSWLRAKEPAGENGGRALVPMFVRKSQFRLPFKSTTPVIMVGPGTGIAPFMGFIQERAWLREQGKEVGETLLYYGCRRSDEDYLYREELARFHKDGALTQLNVAFSREQAHKVYVQHLLKRDREHLWKLIHEGGAHIYVCGDARNMAKDVQNTFYDIVAEFGPMEHTQAVDYVKKLMTKGRYSLDVWS.

G2 is modified (N-acetylglycine). At 2–22 the chain is on the lumenal side; that stretch reads GDSHEDTSATMPEAVAEEVSL. The chain crosses the membrane as a helical span at residues 23–43; the sequence is FSTTDMVLFSLIVGVLTYWFI. Residues 44-678 lie on the Cytoplasmic side of the membrane; that stretch reads FRKKKEEIPE…KGRYSLDVWS (635 aa). The Flavodoxin-like domain maps to 80–224; the sequence is IIVFYGSQTG…DFITWREQFW (145 aa). FMN-binding positions include 86–91, 138–141, 173–182, and D208; these read SQTGTA, ATYG, and LGNKTYEHFN. In terms of domain architecture, FAD-binding FR-type spans 279–521; the sequence is KNPFLAAVTA…FVRKSQFRLP (243 aa). R298 is a binding site for NADP(+). FAD-binding positions include R424, 454–457, 472–474, Y478, and 488–491; these read RYYS, CAV, and GVAT. NADP(+) is bound by residues T535, 596-597, 602-606, and D639; these read SR and KVYVQ. Position 677 (W677) interacts with FAD.

Belongs to the NADPH--cytochrome P450 reductase family. The protein in the N-terminal section; belongs to the flavodoxin family. It in the C-terminal section; belongs to the flavoprotein pyridine nucleotide cytochrome reductase family. The cofactor is FAD. Requires FMN as cofactor.

It is found in the endoplasmic reticulum membrane. The enzyme catalyses 2 oxidized [cytochrome P450] + NADPH = 2 reduced [cytochrome P450] + NADP(+) + H(+). Functionally, this enzyme is required for electron transfer from NADP to cytochrome P450 in microsomes. It can also provide electron transfer to heme oxygenase and cytochrome B5. The protein is NADPH--cytochrome P450 reductase of Rattus norvegicus (Rat).